Here is an 805-residue protein sequence, read N- to C-terminus: MTTEEAAAQYGADSIKVLKGLDAVRKRPGMYIGDTDDGSGLHHMVYEVVDNAIDEALAGHATKVQVILNADGSVTVTDDGRGIPVDMHEGEGVSAAEVIMTQLHAGGKFDQNSYKVSGGLHGVGVSVVNALSDWLELLIHRNGKVHQMRFERGDAVTSLKVTGDSPVRTEGPKAGETLTGTEVTFFPSKDTFAFIEFDRKTLEHRLRELAFLNSGVTIWFKDHRDVEPWEEKLFYEGGIEAFVRHLDKAKTPLLKAPIAVKGVKDKVEIDLALWWNDSYHEQMLCFTNNIPQRDGGTHLSAFRAALTRIITSYAESSGILKKEKVSLGGEDSREGLTCVLSVKVPDPKFSSQTKDKLVSSEVRPAVEGLVSEGLSTWFEEHPNEAKAIVTKIAEAAAAREAARKARELTRRKSALDITSLPGKLADCSERDPAKSEIFIVEGDSAGGSAKQARNRDNQAVLPLRGKILNVERARFDKMLSSDQIGTLITALGAGIGRDDFNPDKVRYHKIVLMTDADVDGAHIRTLLLTFFYRQMPELIERGYIYIAQPPLYKASKGKSSRYLKDDAEMDAFLVDEGVDGAELDLASGERMTGQDLLALVQTCRSAKANIDRLAARAPATAIEQAALSGLLGESPNAAAAATRLDLYAEEGDGPWSGERGDTGFVFSRVRRGVSERVVLDDVLLHAADARRLAERAVKLTEIFSGRAIFRRKDKSTTVRGPLDLVNAVLDAGRKGLTIQRYKGLGEMNPDQLWETTLDAEARTLLQVRVNHADDADDMFSRLMGDLVEPRREFIQENALDAEVDV.

Residues 435–550 (SEIFIVEGDS…RGYIYIAQPP (116 aa)) form the Toprim domain. 3 residues coordinate Mg(2+): Glu441, Asp515, and Asp517.

Belongs to the type II topoisomerase GyrB family. Heterotetramer, composed of two GyrA and two GyrB chains. In the heterotetramer, GyrA contains the active site tyrosine that forms a transient covalent intermediate with DNA, while GyrB binds cofactors and catalyzes ATP hydrolysis. Mg(2+) is required as a cofactor. Mn(2+) serves as cofactor. It depends on Ca(2+) as a cofactor.

It is found in the cytoplasm. It carries out the reaction ATP-dependent breakage, passage and rejoining of double-stranded DNA.. A type II topoisomerase that negatively supercoils closed circular double-stranded (ds) DNA in an ATP-dependent manner to modulate DNA topology and maintain chromosomes in an underwound state. Negative supercoiling favors strand separation, and DNA replication, transcription, recombination and repair, all of which involve strand separation. Also able to catalyze the interconversion of other topological isomers of dsDNA rings, including catenanes and knotted rings. Type II topoisomerases break and join 2 DNA strands simultaneously in an ATP-dependent manner. The polypeptide is DNA gyrase subunit B (Caulobacter vibrioides (strain ATCC 19089 / CIP 103742 / CB 15) (Caulobacter crescentus)).